Here is a 487-residue protein sequence, read N- to C-terminus: Glutamyl-tRNA(Gln) amidotransferase subunit A (487 aa).

Active-site charge relay system residues include K74 and S149. S173 acts as the Acyl-ester intermediate in catalysis.

It belongs to the amidase family. GatA subfamily. In terms of assembly, heterotrimer of A, B and C subunits.

It catalyses the reaction L-glutamyl-tRNA(Gln) + L-glutamine + ATP + H2O = L-glutaminyl-tRNA(Gln) + L-glutamate + ADP + phosphate + H(+). Its function is as follows. Allows the formation of correctly charged Gln-tRNA(Gln) through the transamidation of misacylated Glu-tRNA(Gln) in organisms which lack glutaminyl-tRNA synthetase. The reaction takes place in the presence of glutamine and ATP through an activated gamma-phospho-Glu-tRNA(Gln). The sequence is that of Glutamyl-tRNA(Gln) amidotransferase subunit A from Synechococcus sp. (strain CC9311).